A 630-amino-acid chain; its full sequence is Chaperone protein HtpG (630 aa).

The interval 1 to 343 (MAKHQFQTEA…SKDLPLNVSR (343 aa)) is a; substrate-binding. Positions 344–554 (EILQSNAVMA…KEDPAFMMAQ (211 aa)) are b. Residues 555 to 630 (IMKQMGQSGD…RLNRVIAKAI (76 aa)) form a c region.

The protein belongs to the heat shock protein 90 family. As to quaternary structure, homodimer.

It is found in the cytoplasm. Molecular chaperone. Has ATPase activity. This is Chaperone protein HtpG from Sulfurimonas denitrificans (strain ATCC 33889 / DSM 1251) (Thiomicrospira denitrificans (strain ATCC 33889 / DSM 1251)).